Here is a 189-residue protein sequence, read N- to C-terminus: MKIGLMGGTFDPPHIGHLLIAEQAKEQLQLDAVWFLPAKLPPHKQSTVTSAAKRLELVRAAVRDNQDFSVSEIEFERETKSYTFDTIRELKRRYPEHAFFFLIGADSLVSLGTWHRSEKLYKEIEFGAVARPGSRYLIPEGARVTAVDMPLLEVSSTDIRQRVARGRSIRYLVPEPVRQLIEEWNLYAT.

This sequence belongs to the NadD family.

It carries out the reaction nicotinate beta-D-ribonucleotide + ATP + H(+) = deamido-NAD(+) + diphosphate. Its pathway is cofactor biosynthesis; NAD(+) biosynthesis; deamido-NAD(+) from nicotinate D-ribonucleotide: step 1/1. Catalyzes the reversible adenylation of nicotinate mononucleotide (NaMN) to nicotinic acid adenine dinucleotide (NaAD). This chain is Probable nicotinate-nucleotide adenylyltransferase, found in Exiguobacterium sibiricum (strain DSM 17290 / CCUG 55495 / CIP 109462 / JCM 13490 / 255-15).